We begin with the raw amino-acid sequence, 178 residues long: Large ribosomal subunit protein uL6 (178 aa).

The protein belongs to the universal ribosomal protein uL6 family. Part of the 50S ribosomal subunit.

This protein binds to the 23S rRNA, and is important in its secondary structure. It is located near the subunit interface in the base of the L7/L12 stalk, and near the tRNA binding site of the peptidyltransferase center. The protein is Large ribosomal subunit protein uL6 of Coxiella burnetii (strain CbuG_Q212) (Coxiella burnetii (strain Q212)).